Here is a 311-residue protein sequence, read N- to C-terminus: Nuclear hormone receptor family member nhr-111 (311 aa).

Residues 39 to 115 (ITLCAVCGDT…KGMNKNAVQP (77 aa)) constitute a DNA-binding region (nuclear receptor). 2 NR C4-type zinc fingers span residues 42–62 (CAVCGDTSNGNHYGVPTCFGC) and 78–98 (CWNGDGNCVIDKANRNRCKSC). The NR LBD domain occupies 116-311 (ERTSHSYTVE…KACEIVISFL (196 aa)).

The protein belongs to the nuclear hormone receptor family.

It is found in the nucleus. Orphan nuclear receptor. This chain is Nuclear hormone receptor family member nhr-111 (nhr-111), found in Caenorhabditis elegans.